The primary structure comprises 438 residues: GDP-mannose 6-dehydrogenase (438 aa).

Positions 10, 11, 30, 35, 86, and 124 each coordinate NAD(+). Glu-161, Lys-210, Asn-214, His-217, Asn-225, Tyr-256, Tyr-257, Arg-259, Phe-262, and Gly-265 together coordinate GDP-alpha-D-mannuronate. Residue Cys-268 is part of the active site. Lys-271 lines the NAD(+) pocket. Residue Lys-324 participates in GDP-alpha-D-mannuronate binding. Arg-331 serves as a coordination point for NAD(+).

This sequence belongs to the UDP-glucose/GDP-mannose dehydrogenase family.

The catalysed reaction is GDP-alpha-D-mannose + 2 NAD(+) + H2O = GDP-alpha-D-mannuronate + 2 NADH + 3 H(+). Its pathway is glycan biosynthesis; alginate biosynthesis. Functionally, catalyzes the oxidation of guanosine diphospho-D-mannose (GDP-D-mannose) to GDP-D-mannuronic acid, a precursor for alginate polymerization. The alginate layer causes a mucoid phenotype and provides a protective barrier against host immune defenses and antibiotics. The protein is GDP-mannose 6-dehydrogenase (algD) of Pseudomonas syringae pv. tomato (strain ATCC BAA-871 / DC3000).